A 342-amino-acid polypeptide reads, in one-letter code: UDP-3-O-(3-hydroxymyristoyl)glucosamine N-acyltransferase (342 aa).

Histidine 239 serves as the catalytic Proton acceptor.

This sequence belongs to the transferase hexapeptide repeat family. LpxD subfamily. In terms of assembly, homotrimer.

The enzyme catalyses a UDP-3-O-[(3R)-3-hydroxyacyl]-alpha-D-glucosamine + a (3R)-hydroxyacyl-[ACP] = a UDP-2-N,3-O-bis[(3R)-3-hydroxyacyl]-alpha-D-glucosamine + holo-[ACP] + H(+). It catalyses the reaction UDP-3-O-[(3R)-3-hydroxytetradecanoyl]-alpha-D-glucosamine + (3R)-hydroxytetradecanoyl-[ACP] = UDP-2-N,3-O-bis[(3R)-3-hydroxytetradecanoyl]-alpha-D-glucosamine + holo-[ACP] + H(+). It functions in the pathway glycolipid biosynthesis; lipid IV(A) biosynthesis; lipid IV(A) from (3R)-3-hydroxytetradecanoyl-[acyl-carrier-protein] and UDP-N-acetyl-alpha-D-glucosamine: step 3/6. Catalyzes the N-acylation of UDP-3-O-(hydroxytetradecanoyl)glucosamine using 3-hydroxytetradecanoyl-ACP as the acyl donor. Is involved in the biosynthesis of lipid A, a phosphorylated glycolipid that anchors the lipopolysaccharide to the outer membrane of the cell. This Photorhabdus laumondii subsp. laumondii (strain DSM 15139 / CIP 105565 / TT01) (Photorhabdus luminescens subsp. laumondii) protein is UDP-3-O-(3-hydroxymyristoyl)glucosamine N-acyltransferase.